The following is a 105-amino-acid chain: Probable guanidinium efflux system subunit GdnD (105 aa).

4 helical membrane-spanning segments follow: residues 1-21, 32-52, 59-79, and 85-105; these read MLHWISLLCAGCLEMAGVALM, WVLLIIVGFAASFSLLSYAME, AYAVWTGIGTAGGALIGILFY, and AKRIFFIALILCSAVGLKILS.

This sequence belongs to the drug/metabolite transporter (DMT) superfamily. Small multidrug resistance (SMR) (TC 2.A.7.1) family. YkkC/YkkD subfamily. The efflux pump is composed of GdnC and GdnD.

Its subcellular location is the cell membrane. Functionally, probably involved in guanidinium transport. In vitro, confers resistance to a broad range of toxic compounds such as cationic dyes, neutral and anionic antimicrobials. This Bacillus subtilis (strain 168) protein is Probable guanidinium efflux system subunit GdnD.